Consider the following 314-residue polypeptide: Glycine--tRNA ligase alpha subunit (314 aa).

It belongs to the class-II aminoacyl-tRNA synthetase family. In terms of assembly, tetramer of two alpha and two beta subunits.

It localises to the cytoplasm. The enzyme catalyses tRNA(Gly) + glycine + ATP = glycyl-tRNA(Gly) + AMP + diphosphate. This is Glycine--tRNA ligase alpha subunit from Mesorhizobium japonicum (strain LMG 29417 / CECT 9101 / MAFF 303099) (Mesorhizobium loti (strain MAFF 303099)).